We begin with the raw amino-acid sequence, 745 residues long: Capsid protein (745 aa).

Disordered stretches follow at residues 23 to 44 (RRPL…RRTV), 598 to 619 (PCKT…QVAD), and 660 to 700 (QPKR…EQAT). Basic and acidic residues-rich tracts occupy residues 599-612 (CKTD…DRHP) and 675-691 (GEFR…EERS).

The protein belongs to the anelloviridae capsid protein family.

The protein resides in the virion. Self assemble to form an icosahedral capsid. This chain is Capsid protein, found in Homo sapiens (Human).